Here is a 341-residue protein sequence, read N- to C-terminus: Gibberellin 2-beta-dioxygenase 5 (341 aa).

In terms of domain architecture, Fe2OG dioxygenase spans 187–290 (REETCFLRLN…RFSMAFFLCP (104 aa)). 2-oxoglutarate is bound at residue tyrosine 198. Fe cation contacts are provided by histidine 213, aspartate 215, and histidine 271. Arginine 281 and serine 283 together coordinate 2-oxoglutarate.

The protein belongs to the iron/ascorbate-dependent oxidoreductase family. GA2OX subfamily. It depends on L-ascorbate as a cofactor. Fe(2+) is required as a cofactor. Expressed in roots, leaves, culms, leaf sheaths and young panicles.

It localises to the cytoplasm. The protein resides in the nucleus. It carries out the reaction gibberellin A1 + 2-oxoglutarate + O2 = gibberellin A8 + succinate + CO2. It participates in plant hormone biosynthesis; gibberellin biosynthesis. Functionally, catalyzes the 2-beta-hydroxylation of several biologically active gibberellins (GAs), leading to the homeostatic regulation of their endogenous level. Catabolism of GAs plays a central role in plant development. In vitro, converts GA12 and GA53 to the corresponding 2-beta-hydroxylated products GA110 and GA97, respectively. The sequence is that of Gibberellin 2-beta-dioxygenase 5 from Oryza sativa subsp. japonica (Rice).